The following is a 340-amino-acid chain: GTP 3',8-cyclase (340 aa).

The Radical SAM core domain occupies R20–K246. R29 serves as a coordination point for GTP. [4Fe-4S] cluster-binding residues include C36 and C40. Y42 lines the S-adenosyl-L-methionine pocket. C43 is a [4Fe-4S] cluster binding site. R79 lines the GTP pocket. S-adenosyl-L-methionine is bound at residue G83. Residue T110 participates in GTP binding. An S-adenosyl-L-methionine-binding site is contributed by S134. K171 contributes to the GTP binding site. M205 contributes to the S-adenosyl-L-methionine binding site. [4Fe-4S] cluster is bound by residues C268 and C271. R273–R275 contacts GTP. [4Fe-4S] cluster is bound at residue C285.

Belongs to the radical SAM superfamily. MoaA family. In terms of assembly, monomer and homodimer. It depends on [4Fe-4S] cluster as a cofactor.

The enzyme catalyses GTP + AH2 + S-adenosyl-L-methionine = (8S)-3',8-cyclo-7,8-dihydroguanosine 5'-triphosphate + 5'-deoxyadenosine + L-methionine + A + H(+). The protein operates within cofactor biosynthesis; molybdopterin biosynthesis. In terms of biological role, catalyzes the cyclization of GTP to (8S)-3',8-cyclo-7,8-dihydroguanosine 5'-triphosphate. The sequence is that of GTP 3',8-cyclase from Actinobacillus pleuropneumoniae serotype 5b (strain L20).